Consider the following 340-residue polypeptide: Ketol-acid reductoisomerase (NADP(+)) (340 aa).

Residues 3 to 183 (VSIYYDKDCD…GGGRTGIIET (181 aa)) enclose the KARI N-terminal Rossmann domain. NADP(+)-binding positions include 26–29 (FGSQ), K49, S54, and 84–87 (DEIQ). H109 is a catalytic residue. G135 contacts NADP(+). The KARI C-terminal knotted domain occupies 184–329 (TFKAETETDL…RELRAMMPWI (146 aa)). Mg(2+)-binding residues include D192, E196, E228, and E232. S253 is a binding site for substrate.

It belongs to the ketol-acid reductoisomerase family. Requires Mg(2+) as cofactor.

The enzyme catalyses (2R)-2,3-dihydroxy-3-methylbutanoate + NADP(+) = (2S)-2-acetolactate + NADPH + H(+). It catalyses the reaction (2R,3R)-2,3-dihydroxy-3-methylpentanoate + NADP(+) = (S)-2-ethyl-2-hydroxy-3-oxobutanoate + NADPH + H(+). It functions in the pathway amino-acid biosynthesis; L-isoleucine biosynthesis; L-isoleucine from 2-oxobutanoate: step 2/4. The protein operates within amino-acid biosynthesis; L-valine biosynthesis; L-valine from pyruvate: step 2/4. Involved in the biosynthesis of branched-chain amino acids (BCAA). Catalyzes an alkyl-migration followed by a ketol-acid reduction of (S)-2-acetolactate (S2AL) to yield (R)-2,3-dihydroxy-isovalerate. In the isomerase reaction, S2AL is rearranged via a Mg-dependent methyl migration to produce 3-hydroxy-3-methyl-2-ketobutyrate (HMKB). In the reductase reaction, this 2-ketoacid undergoes a metal-dependent reduction by NADPH to yield (R)-2,3-dihydroxy-isovalerate. The protein is Ketol-acid reductoisomerase (NADP(+)) of Campylobacter lari (strain RM2100 / D67 / ATCC BAA-1060).